The primary structure comprises 262 residues: MIDKSAFVHPTAIVEEGASIGANAHIGPFCIVGPHVEIGEGTVLKSHVVVNGHTKIGRDNEIYQFASIGEVNQDLKYAGEPTRVEIGDRNRIRESVTIHRGTVQGGGLTKVGSDNLLMINAHIAHDCTVGNRCILANNATLAGHVSVDDFAIIGGMTAVHQFCIIGAHVMVGGCSGVAQDVPPYVIAQGNHATPFGVNTEGLKRRGFSREAITAIRNAYKLIYRSGKTLDEVKPEIAELAETYPEVKAFTDFFARSTRGLIR.

It belongs to the transferase hexapeptide repeat family. LpxA subfamily. As to quaternary structure, homotrimer.

The protein resides in the cytoplasm. It carries out the reaction a (3R)-hydroxyacyl-[ACP] + UDP-N-acetyl-alpha-D-glucosamine = a UDP-3-O-[(3R)-3-hydroxyacyl]-N-acetyl-alpha-D-glucosamine + holo-[ACP]. It participates in glycolipid biosynthesis; lipid IV(A) biosynthesis; lipid IV(A) from (3R)-3-hydroxytetradecanoyl-[acyl-carrier-protein] and UDP-N-acetyl-alpha-D-glucosamine: step 1/6. In terms of biological role, involved in the biosynthesis of lipid A, a phosphorylated glycolipid that anchors the lipopolysaccharide to the outer membrane of the cell. The chain is Acyl-[acyl-carrier-protein]--UDP-N-acetylglucosamine O-acyltransferase from Shigella flexneri serotype 5b (strain 8401).